The sequence spans 96 residues: Large ribosomal subunit protein uL23 (96 aa).

The protein belongs to the universal ribosomal protein uL23 family. Part of the 50S ribosomal subunit. Contacts protein L29, and trigger factor when it is bound to the ribosome.

Functionally, one of the early assembly proteins it binds 23S rRNA. One of the proteins that surrounds the polypeptide exit tunnel on the outside of the ribosome. Forms the main docking site for trigger factor binding to the ribosome. This chain is Large ribosomal subunit protein uL23, found in Clostridium novyi (strain NT).